The primary structure comprises 348 residues: Isopentenyl-diphosphate delta-isomerase (348 aa).

9 to 10 (RK) contacts substrate. Residues 68 to 70 (AMT), S98, and N127 each bind FMN. A substrate-binding site is contributed by Q157. Residue E158 participates in Mg(2+) binding. Residues K188, S213, T218, and 286-287 (AG) each bind FMN.

The protein belongs to the IPP isomerase type 2 family. Homooctamer. Dimer of tetramers. It depends on FMN as a cofactor. NADPH serves as cofactor. The cofactor is Mg(2+).

The protein resides in the cytoplasm. The enzyme catalyses isopentenyl diphosphate = dimethylallyl diphosphate. Functionally, involved in the biosynthesis of isoprenoids. Catalyzes the 1,3-allylic rearrangement of the homoallylic substrate isopentenyl (IPP) to its allylic isomer, dimethylallyl diphosphate (DMAPP). The sequence is that of Isopentenyl-diphosphate delta-isomerase from Limosilactobacillus reuteri (strain DSM 20016) (Lactobacillus reuteri).